Consider the following 293-residue polypeptide: MSGNNMLKIGIPKGSLEEATVNLFARSGWKIRKHHRNYFPEINDPELTARLCRVQEIPRYLEDGVLDVGLTGKDWLLETGADVVTVSDLVYSKVSNRPARWVLAVAGDSPYVRPEDLAGCTIATELLGVTRRYFEDAGIPVKVQYSWGATEAKVVEGLADAIVEVTETGTTIKAHGLRIIAEVLLTNTVLIAGKAAWADPWKRAKIEQIDLLLQGALRADSLVGLKMNVPAHNLDAVLDQLPSLNSPTVAGLRDSTWYAVEIVVENDLVRDLIPRLRAAGAEGIIEYSLNKVI.

Belongs to the ATP phosphoribosyltransferase family. Long subfamily. Mg(2+) is required as a cofactor.

The protein resides in the cytoplasm. It catalyses the reaction 1-(5-phospho-beta-D-ribosyl)-ATP + diphosphate = 5-phospho-alpha-D-ribose 1-diphosphate + ATP. It participates in amino-acid biosynthesis; L-histidine biosynthesis; L-histidine from 5-phospho-alpha-D-ribose 1-diphosphate: step 1/9. Its activity is regulated as follows. Feedback inhibited by histidine. Functionally, catalyzes the condensation of ATP and 5-phosphoribose 1-diphosphate to form N'-(5'-phosphoribosyl)-ATP (PR-ATP). Has a crucial role in the pathway because the rate of histidine biosynthesis seems to be controlled primarily by regulation of HisG enzymatic activity. The chain is ATP phosphoribosyltransferase from Nitratidesulfovibrio vulgaris (strain DSM 19637 / Miyazaki F) (Desulfovibrio vulgaris).